The primary structure comprises 350 residues: UDP-N-acetylenolpyruvoylglucosamine reductase (350 aa).

Residues 24 to 195 enclose the FAD-binding PCMH-type domain; it reads HVEATARWLL…VAVEFNLPLL (172 aa). R172 is a catalytic residue. S245 serves as the catalytic Proton donor. Residue E342 is part of the active site.

Belongs to the MurB family. The cofactor is FAD.

The protein localises to the cytoplasm. The enzyme catalyses UDP-N-acetyl-alpha-D-muramate + NADP(+) = UDP-N-acetyl-3-O-(1-carboxyvinyl)-alpha-D-glucosamine + NADPH + H(+). It participates in cell wall biogenesis; peptidoglycan biosynthesis. Functionally, cell wall formation. This is UDP-N-acetylenolpyruvoylglucosamine reductase from Xanthomonas euvesicatoria pv. vesicatoria (strain 85-10) (Xanthomonas campestris pv. vesicatoria).